Reading from the N-terminus, the 259-residue chain is Protein unc-50 homolog (259 aa).

Met1 is subject to N-acetylmethionine. Topologically, residues 1 to 82 are cytoplasmic; it reads MLPSTSVNSL…TKDQWARDDP (82 aa). Ser6 carries the phosphoserine modification. A helical transmembrane segment spans residues 83–103; it reads AFLVLLSIWLCVSTIGFGFVL. Residues 104 to 115 are Lumenal-facing; it reads DMGFFETIKLLL. Residues 116–136 form a helical membrane-spanning segment; the sequence is WVVLIDCVGVGLLIATLMWFI. Topologically, residues 137 to 163 are cytoplasmic; sequence SNKYLVKRQSRDYDVEWGYAFDVHLNA. A helical membrane pass occupies residues 164 to 184; it reads FYPLLVILHFIQLFFINHVIL. At 185 to 187 the chain is on the lumenal side; it reads TDT. The chain crosses the membrane as a helical span at residues 188-208; that stretch reads FIGYLVGNTLWLVAVGYYIYV. At 209–222 the chain is on the cytoplasmic side; that stretch reads TFLGYSALPFLKNT. The helical transmembrane segment at 223-243 threads the bilayer; it reads VILLYPFAPLILLYGLSLALG. The Lumenal segment spans residues 244–259; that stretch reads WNFTHTLCSFYKYRVK.

Belongs to the unc-50 family. In terms of tissue distribution, present in periodontal ligament fibroblasts (at protein level).

The protein localises to the nucleus inner membrane. It localises to the golgi apparatus membrane. Functionally, involved in the cell surface expression of neuronal nicotinic receptors. Binds RNA. This chain is Protein unc-50 homolog (UNC50), found in Homo sapiens (Human).